The chain runs to 158 residues: UPF0260 protein RL1394 (158 aa).

The protein belongs to the UPF0260 family.

This Rhizobium johnstonii (strain DSM 114642 / LMG 32736 / 3841) (Rhizobium leguminosarum bv. viciae) protein is UPF0260 protein RL1394.